Consider the following 356-residue polypeptide: Homoserine O-acetyltransferase (356 aa).

An AB hydrolase-1 domain is found at 50 to 335 (NVILVCHALT…DEPYGHDAFL (286 aa)). The Nucleophile role is filled by Ser-146. A substrate-binding site is contributed by Arg-215. Residues Asp-302 and His-331 contribute to the active site. Residue Asp-332 participates in substrate binding.

This sequence belongs to the AB hydrolase superfamily. MetX family. In terms of assembly, homodimer.

The protein localises to the cytoplasm. The catalysed reaction is L-homoserine + acetyl-CoA = O-acetyl-L-homoserine + CoA. The protein operates within amino-acid biosynthesis; L-methionine biosynthesis via de novo pathway; O-acetyl-L-homoserine from L-homoserine: step 1/1. In terms of biological role, transfers an acetyl group from acetyl-CoA to L-homoserine, forming acetyl-L-homoserine. This is Homoserine O-acetyltransferase from Chlorobaculum parvum (strain DSM 263 / NCIMB 8327) (Chlorobium vibrioforme subsp. thiosulfatophilum).